We begin with the raw amino-acid sequence, 150 residues long: Molybdopterin synthase catalytic subunit (150 aa).

Substrate is bound by residues Lys-37–Arg-39, His-103–Arg-104, Lys-119, and Lys-126–Glu-128.

This sequence belongs to the MoaE family. In terms of assembly, heterotetramer of 2 MoaD subunits and 2 MoaE subunits. Also stable as homodimer. The enzyme changes between these two forms during catalysis.

It carries out the reaction 2 [molybdopterin-synthase sulfur-carrier protein]-C-terminal-Gly-aminoethanethioate + cyclic pyranopterin phosphate + H2O = molybdopterin + 2 [molybdopterin-synthase sulfur-carrier protein]-C-terminal Gly-Gly + 2 H(+). Its pathway is cofactor biosynthesis; molybdopterin biosynthesis. Converts molybdopterin precursor Z into molybdopterin. This requires the incorporation of two sulfur atoms into precursor Z to generate a dithiolene group. The sulfur is provided by MoaD. The protein is Molybdopterin synthase catalytic subunit (moaE) of Salmonella typhi.